The chain runs to 363 residues: Phosphoribosylformylglycinamidine cyclo-ligase (363 aa).

Belongs to the AIR synthase family.

It is found in the cytoplasm. It catalyses the reaction 2-formamido-N(1)-(5-O-phospho-beta-D-ribosyl)acetamidine + ATP = 5-amino-1-(5-phospho-beta-D-ribosyl)imidazole + ADP + phosphate + H(+). Its pathway is purine metabolism; IMP biosynthesis via de novo pathway; 5-amino-1-(5-phospho-D-ribosyl)imidazole from N(2)-formyl-N(1)-(5-phospho-D-ribosyl)glycinamide: step 2/2. This Parvibaculum lavamentivorans (strain DS-1 / DSM 13023 / NCIMB 13966) protein is Phosphoribosylformylglycinamidine cyclo-ligase.